Consider the following 670-residue polypeptide: DNA ligase (670 aa).

Residues 32–36, 81–82, and glutamate 114 each bind NAD(+); these read DSEYD and SL. Lysine 116 serves as the catalytic N6-AMP-lysine intermediate. NAD(+) contacts are provided by arginine 137, glutamate 174, lysine 291, and lysine 315. Positions 409, 412, 427, and 433 each coordinate Zn(2+). A BRCT domain is found at 592–670; the sequence is ASENLFKDKT…EEEFLAQITR (79 aa).

Belongs to the NAD-dependent DNA ligase family. LigA subfamily. Mg(2+) serves as cofactor. Mn(2+) is required as a cofactor.

The enzyme catalyses NAD(+) + (deoxyribonucleotide)n-3'-hydroxyl + 5'-phospho-(deoxyribonucleotide)m = (deoxyribonucleotide)n+m + AMP + beta-nicotinamide D-nucleotide.. Its function is as follows. DNA ligase that catalyzes the formation of phosphodiester linkages between 5'-phosphoryl and 3'-hydroxyl groups in double-stranded DNA using NAD as a coenzyme and as the energy source for the reaction. It is essential for DNA replication and repair of damaged DNA. The polypeptide is DNA ligase (Haemophilus influenzae (strain PittGG)).